The chain runs to 200 residues: Recombination protein RecR (200 aa).

The segment at 60 to 75 (CVYCQALTEDDVCNIC) adopts a C4-type zinc-finger fold. Residues 83-177 (TKLCIIESML…KISRIGFGVP (95 aa)) form the Toprim domain.

Belongs to the RecR family.

In terms of biological role, may play a role in DNA repair. It seems to be involved in an RecBC-independent recombinational process of DNA repair. It may act with RecF and RecO. This chain is Recombination protein RecR, found in Francisella tularensis subsp. tularensis (strain SCHU S4 / Schu 4).